The following is a 487-amino-acid chain: Signal recognition particle subunit SRP54 (487 aa).

A G-domain region spans residues 1–295 (MVLSQLGSSL…DAESFVRKLL (295 aa)). GTP is bound by residues 108-115 (GLQGAGKT), 190-194 (DTSGR), and 248-251 (TKLD). An M-domain region spans residues 296-487 (GMGDLKGIAK…LGGTGKKGKK (192 aa)).

The protein belongs to the GTP-binding SRP family. SRP54 subfamily. In terms of assembly, component of a signal recognition particle (SRP) complex that consists of a 7SL RNA molecule of 300 nucleotides and six protein subunits: SRP72, SRP68, SRP54, SRP19, SRP14 and SRP9.

It is found in the cytoplasm. The protein resides in the endoplasmic reticulum. The catalysed reaction is GTP + H2O = GDP + phosphate + H(+). Functionally, component of the signal recognition particle (SRP) complex, a ribonucleoprotein complex that mediates the cotranslational targeting of secretory and membrane proteins to the endoplasmic reticulum (ER). As part of the SRP complex, associates with the SRP receptor (SR) component SRPRA to target secretory proteins to the endoplasmic reticulum membrane. Binds to the signal sequence of presecretory proteins when they emerge from the ribosomes. Displays basal GTPase activity, and stimulates reciprocal GTPase activation of the SR subunit SRPRA. Forms a guanosine 5'-triphosphate (GTP)-dependent complex with the SR subunit SRPRA. SR compaction and GTPase mediated rearrangement of SR drive SRP-mediated cotranslational protein translocation into the ER. Requires the presence of SRP9/SRP14 and/or SRP19 to stably interact with RNA. The protein is Signal recognition particle subunit SRP54 of Entamoeba histolytica (strain ATCC 30459 / HM-1:IMSS / ABRM).